Consider the following 362-residue polypeptide: uncharacterized protein (362 aa).

This sequence belongs to the carbohydrate kinase PfkB family.

This is an uncharacterized protein from Escherichia coli (strain K12).